The following is a 98-amino-acid chain: Keratin-associated protein 3-3 (98 aa).

3 repeat units span residues 3-7, 47-51, and 89-93. The 3 X 5 AA repeats of C-C-X(3) stretch occupies residues 3-59; the sequence is CCASRGCSVPTGPATTICSSDKSCRCGVCLPSTCPHTVWLLEPTCCDNCPPPCHIPQ.

This sequence belongs to the KRTAP type 3 family. In terms of assembly, interacts with hair keratins. Localized to the upper cortex of the hair shaft.

Functionally, in the hair cortex, hair keratin intermediate filaments are embedded in an interfilamentous matrix, consisting of hair keratin-associated proteins (KRTAP), which are essential for the formation of a rigid and resistant hair shaft through their extensive disulfide bond cross-linking with abundant cysteine residues of hair keratins. The matrix proteins include the high-sulfur and high-glycine-tyrosine keratins. This chain is Keratin-associated protein 3-3 (KRTAP3-3), found in Homo sapiens (Human).